The following is a 225-amino-acid chain: 2-C-methyl-D-erythritol 4-phosphate cytidylyltransferase (225 aa).

The protein belongs to the IspD/TarI cytidylyltransferase family. IspD subfamily.

The catalysed reaction is 2-C-methyl-D-erythritol 4-phosphate + CTP + H(+) = 4-CDP-2-C-methyl-D-erythritol + diphosphate. It functions in the pathway isoprenoid biosynthesis; isopentenyl diphosphate biosynthesis via DXP pathway; isopentenyl diphosphate from 1-deoxy-D-xylulose 5-phosphate: step 2/6. Functionally, catalyzes the formation of 4-diphosphocytidyl-2-C-methyl-D-erythritol from CTP and 2-C-methyl-D-erythritol 4-phosphate (MEP). The chain is 2-C-methyl-D-erythritol 4-phosphate cytidylyltransferase from Haemophilus influenzae (strain PittEE).